A 200-amino-acid chain; its full sequence is MIDPVLEYRLSQIQSRINEDRFLKNNGSGNEIGFWIFDYPAQCELQVREHLKYLLRHLEKDHKFACLNVFQIIIDMLNERGLFERVCQQEVKVGTETLKKQLAGPLNQKKIADFIAKKVDLAAQDFVILTGMGNAWPLVRGHELMSALQDVMGFTPLLMFYPGTYSGYNLSPLTDTGSQNYYRAFRLVPDTGPAATLNPQ.

It belongs to the BrxB family.

Its function is as follows. BREX systems (bacteriophage exclusion) provide immunity against bacteriophage. Part of a type 1 BREX system which protects against dsDNA phage. This system allows phage adsorption but prevents phage DNA replication, without degradation of the phage DNA. Methylation of bacterial DNA by PglX guides self/non-self discrimination. When the brxA-brxB-brxC-pglX-pglZ-brxL genes are transformed into a susceptible E.coli strain (BW25113) they confer very high resistance to infection by bacteriophage VR7 and VpaE1, about 100-fold protection against lambda, T5 and T7 and no protection against RNA phage Qbeta, ssDNA phage M13 or dSDNA phage T4 and VR5. Glycosylated phage DNA is not susceptible to BREX. The BREX system does not confer resistance to lysogenic lambda phage, i.e. prophage that are integrated into the chromosomal DNA and then induced to form phage. This is BREX protein BrxB from Escherichia coli O9:H4 (strain HS).